The following is a 144-amino-acid chain: MKIPNRQKFTKNHKRNLITKETRKTGLVLGNYGIKATETGYLKMKQMERIKGDLVKKLKDNMDIYFNFYPLFGLTNKGTARMGAGKGEVSEWYVLVKKGSIVVEFIKSRMTAGAMQKVIRYSANKWPIKVRMTQIKQGLYEKKI.

It belongs to the universal ribosomal protein uL16 family.

It localises to the mitochondrion. The chain is Large ribosomal subunit protein uL16m (mrpl16) from Dictyostelium discoideum (Social amoeba).